Here is a 187-residue protein sequence, read N- to C-terminus: Elongation factor P (187 aa).

Position 34 is an N6-(3,6-diaminohexanoyl)-5-hydroxylysine (Lys-34).

This sequence belongs to the elongation factor P family. May be beta-lysylated on the epsilon-amino group of Lys-34 by the combined action of EpmA and EpmB, and then hydroxylated on the C5 position of the same residue by EpmC (if this protein is present). Lysylation is critical for the stimulatory effect of EF-P on peptide-bond formation. The lysylation moiety may extend toward the peptidyltransferase center and stabilize the terminal 3-CCA end of the tRNA. Hydroxylation of the C5 position on Lys-34 may allow additional potential stabilizing hydrogen-bond interactions with the P-tRNA.

The protein localises to the cytoplasm. The protein operates within protein biosynthesis; polypeptide chain elongation. Functionally, involved in peptide bond synthesis. Alleviates ribosome stalling that occurs when 3 or more consecutive Pro residues or the sequence PPG is present in a protein, possibly by augmenting the peptidyl transferase activity of the ribosome. Modification of Lys-34 is required for alleviation. In Buchnera aphidicola subsp. Schizaphis graminum (strain Sg), this protein is Elongation factor P.